A 368-amino-acid chain; its full sequence is Glutamate 5-kinase (368 aa).

Lys-9 serves as a coordination point for ATP. Substrate contacts are provided by Ser-49, Asp-136, and Asn-148. ATP contacts are provided by residues 168–169 and 210–216; these read TD and TGGMMTK. A PUA domain is found at 275 to 353; it reads AGIITIDNGA…ADIENVLGYE (79 aa).

This sequence belongs to the glutamate 5-kinase family.

It is found in the cytoplasm. The catalysed reaction is L-glutamate + ATP = L-glutamyl 5-phosphate + ADP. Its pathway is amino-acid biosynthesis; L-proline biosynthesis; L-glutamate 5-semialdehyde from L-glutamate: step 1/2. Catalyzes the transfer of a phosphate group to glutamate to form L-glutamate 5-phosphate. This chain is Glutamate 5-kinase, found in Haemophilus influenzae (strain ATCC 51907 / DSM 11121 / KW20 / Rd).